Reading from the N-terminus, the 530-residue chain is UDP-glucuronosyltransferase 1A7 (530 aa).

The first 25 residues, 1–25 (MARAGWTGLLPLYVCLLLTCGFAKA), serve as a signal peptide directing secretion. N-linked (GlcNAc...) asparagine glycans are attached at residues Asn71, Asn292, and Asn344. The chain crosses the membrane as a helical span at residues 488–504 (VIGFLLAVVLTVAFITF).

Belongs to the UDP-glycosyltransferase family. As to quaternary structure, homodimer. Homooligomer. Interacts with UGT1A1, UGT1A3, UGT1A4, UGT1A6, UGT1A8, UGT1A9 and UGT1A10 to form heterodimers. Isoform 1 interacts with isoform 2/i2 suggesting that oligomerization is involved in negative regulation of transferase activity by isoform 2. Isoform 1 also interacts with respective i2 isoforms of UGT1A1, UGT1A3, UGT1A4, UGT1A6, UGT1A8, UGT1A9 and UGT1A10. In terms of tissue distribution, liver and gastric tissue. Isoform 1 and isoform 2 are expressed in esophagus. Neither isoform is expressed in liver, kidney, colon and small intestine.

The protein localises to the endoplasmic reticulum membrane. It catalyses the reaction glucuronate acceptor + UDP-alpha-D-glucuronate = acceptor beta-D-glucuronoside + UDP + H(+). The enzyme catalyses 17alpha-estradiol + UDP-alpha-D-glucuronate = 17alpha-estradiol 3-O-(beta-D-glucuronate) + UDP + H(+). The catalysed reaction is prunetin + UDP-alpha-D-glucuronate = prunetin-5-O-beta-D-glucuronide + UDP. It carries out the reaction 5-epi-5-F2t-IsoP + UDP-alpha-D-glucuronate = 5-epi-5-F2t-IsoP-glucuronide + UDP + H(+). It catalyses the reaction (E)-ferulate + UDP-alpha-D-glucuronate = (E)-ferulic acid beta-D-glucuronate ester + UDP. The enzyme catalyses candesartan + UDP-alpha-D-glucuronate = candesartan O-beta-D-glucuronoside + UDP. The catalysed reaction is SN-38 + UDP-alpha-D-glucuronate = SN-38 O-beta-D-glucuronide + UDP + H(+). It carries out the reaction mycophenolate + UDP-alpha-D-glucuronate = mycophenolate 7-O-beta-D-glucuronide + UDP + H(+). In terms of biological role, UDP-glucuronosyltransferase (UGT) that catalyzes phase II biotransformation reactions in which lipophilic substrates are conjugated with glucuronic acid to increase the metabolite's water solubility, thereby facilitating excretion into either the urine or bile. Essential for the elimination and detoxification of drugs, xenobiotics and endogenous compounds. Catalyzes the glucuronidation of endogenous estrogen hormone epiestradiol. Involved in the glucuronidation of F2-isoprostane (5-epi-5-F2t-IsoP). Involved in the glucuronidation of the phytochemical ferulic acid at the carboxylic acid group. Also catalyzes the glucuronidation of the isoflavones genistein, daidzein, glycitein, formononetin, biochanin A and prunetin, which are phytoestrogens with anticancer and cardiovascular properties. Involved in the glucuronidation of the AGTR1 angiotensin receptor antagonist caderastan, a drug which can inhibit the effect of angiotensin II. Involved in the biotransformation of 7-ethyl-10-hydroxycamptothecin (SN-38), the pharmacologically active metabolite of the anticancer drug irinotecan. Also metabolizes mycophenolate, an immunosuppressive agent. Functionally, lacks UGT glucuronidation activity but acts as a negative regulator of isoform 1. This Homo sapiens (Human) protein is UDP-glucuronosyltransferase 1A7.